Consider the following 44-residue polypeptide: Thymosin beta-10 (44 aa).

2 stretches are compositionally biased toward basic and acidic residues: residues 1 to 25 (MADK…ETQE) and 33 to 44 (ETIEQEKRSEIS). Residues 1-44 (MADKPDMGEIASFDKAKLKKTETQEKNTLPTKETIEQEKRSEIS) form a disordered region. Ala2 carries the post-translational modification N-acetylalanine. Residue Lys4 is modified to N6-acetyllysine. Phosphoserine is present on Ser12. Lys15 carries the N6-acetyllysine modification. Phosphothreonine occurs at positions 21, 23, and 34. Lys39 is modified (N6-acetyllysine). Ser41 carries the post-translational modification Phosphoserine.

The protein belongs to the thymosin beta family.

It localises to the cytoplasm. The protein resides in the cytoskeleton. Functionally, plays an important role in the organization of the cytoskeleton. Binds to and sequesters actin monomers (G actin) and therefore inhibits actin polymerization. The protein is Thymosin beta-10 (Tmsb10) of Rattus norvegicus (Rat).